Here is a 151-residue protein sequence, read N- to C-terminus: Deoxyuridine 5'-triphosphate nucleotidohydrolase (151 aa).

Substrate contacts are provided by residues 70-72 (RSG), Asn-83, 87-89 (LID), and Met-97.

Belongs to the dUTPase family. Mg(2+) is required as a cofactor.

It carries out the reaction dUTP + H2O = dUMP + diphosphate + H(+). It functions in the pathway pyrimidine metabolism; dUMP biosynthesis; dUMP from dCTP (dUTP route): step 2/2. Functionally, this enzyme is involved in nucleotide metabolism: it produces dUMP, the immediate precursor of thymidine nucleotides and it decreases the intracellular concentration of dUTP so that uracil cannot be incorporated into DNA. The polypeptide is Deoxyuridine 5'-triphosphate nucleotidohydrolase (Salmonella enteritidis PT4 (strain P125109)).